The following is a 316-amino-acid chain: UPF0761 membrane protein PM1616 (316 aa).

A run of 6 helical transmembrane segments spans residues 36-56 (MLAL…FPVF), 92-112 (QMSA…INSI), 128-148 (LVFS…LIGA), 172-192 (ILSF…YTVV), 204-224 (IGAL…LWYV), and 236-256 (AMAT…VILI).

Belongs to the UPF0761 family.

The protein resides in the cell inner membrane. This is UPF0761 membrane protein PM1616 from Pasteurella multocida (strain Pm70).